A 1760-amino-acid chain; its full sequence is Chitin synthase A (1760 aa).

N-linked (GlcNAc...) asparagine glycosylation is present at asparagine 157. 2 helical membrane passes run 729-749 (IWTG…LRFV) and 765-785 (LVLV…IIAF). N-linked (GlcNAc...) asparagine glycans are attached at residues asparagine 876 and asparagine 996. A helical transmembrane segment spans residues 1027 to 1047 (ILLAFTCLICAVILVKFLAAL). Asparagine 1392 carries N-linked (GlcNAc...) asparagine glycosylation. The next 3 helical transmembrane spans lie at 1417–1437 (FVVL…VYLG), 1449–1469 (IPII…IIFI), and 1477–1497 (IGWM…LPMY). 3 N-linked (GlcNAc...) asparagine glycosylation sites follow: asparagine 1557, asparagine 1645, and asparagine 1650. Residues 1670-1691 (DNLLGVPRPNSRSPVGGYTSRP) are disordered. In terms of domain architecture, DEK-C spans 1702-1758 (GPDEMAITDAIRSCLAEVDLDTVTKKQVRALVEQRLQATLTGDKRAFLDRQIDQELA).

It belongs to the chitin synthase family. Class V subfamily.

Its subcellular location is the cell membrane. The enzyme catalyses [(1-&gt;4)-N-acetyl-beta-D-glucosaminyl](n) + UDP-N-acetyl-alpha-D-glucosamine = [(1-&gt;4)-N-acetyl-beta-D-glucosaminyl](n+1) + UDP + H(+). In terms of biological role, polymerizes chitin, a structural polymer of the cell wall and septum, by transferring the sugar moiety of UDP-GlcNAc to the non-reducing end of the growing chitin polymer. Plays an important role in cell-wall formation during both hyphal growth and conidiation. The chain is Chitin synthase A from Aspergillus oryzae (strain ATCC 42149 / RIB 40) (Yellow koji mold).